Consider the following 492-residue polypeptide: Beta-Ala-His dipeptidase (492 aa).

Residue His-107 participates in Zn(2+) binding. The active site involves Asp-109. Asp-140 is a Zn(2+) binding site. The active-site Proton acceptor is Glu-174. Zn(2+) is bound at residue Glu-175. Ser-194 carries the phosphoserine modification. Zn(2+) contacts are provided by Asp-203 and His-453.

Belongs to the peptidase M20A family. Homodimer. Zn(2+) is required as a cofactor. As to expression, detected exclusively in kidney.

The protein localises to the secreted. The enzyme catalyses Preferential hydrolysis of the beta-Ala-|-His dipeptide (carnosine), and also anserine, Xaa-|-His dipeptides and other dipeptides including homocarnosine.. The catalysed reaction is carnosine + H2O = beta-alanine + L-histidine. It carries out the reaction anserine + H2O = N(pros)-methyl-L-histidine + beta-alanine. It catalyses the reaction L-alanyl-L-histidine + H2O = L-histidine + L-alanine. The enzyme catalyses glycyl-L-histidine + H2O = L-histidine + glycine. The catalysed reaction is L-homocarnosine + H2O = 4-aminobutanoate + L-histidine. Functionally, catalyzes the peptide bond hydrolysis in Xaa-His dipeptides, displaying the highest activity toward carnosine (beta-alanyl-L-histidine) and anserine (beta-alanyl-3-methyl-histidine). The polypeptide is Beta-Ala-His dipeptidase (Cndp1) (Mus musculus (Mouse)).